The primary structure comprises 570 residues: Pentatricopeptide repeat-containing protein At1g31430 (570 aa).

PPR repeat units lie at residues 10-44, 45-79, 80-110, 111-141, 147-177, 181-215, 216-242, 243-277, 278-312, 313-343, 344-378, 379-414, and 415-449; these read SLLM…GLYP, DNFT…GLEF, DSYV…MPQR, DVVS…MSQE, DEGT…VVTE, SVRI…NVKC, WTSM…SPVK, DVVL…GIRP, DNFV…RVTV, DKVV…IKER, DTAS…GVRL, DAIT…NVQP, and KSEH…SDET. Positions 453–528 are type E motif; that stretch reads VYCSLLSAAR…FPGCSSIEID (76 aa). The segment at 529–561 is type E(+) motif; sequence GVGHEFIVGDDLLSHPKMDEINSMLHQTTNLML.

The protein belongs to the PPR family. PCMP-E subfamily.

The sequence is that of Pentatricopeptide repeat-containing protein At1g31430 (PCMP-E55) from Arabidopsis thaliana (Mouse-ear cress).